The primary structure comprises 88 residues: Conotoxin MaIr34 (88 aa).

Positions 1-21 (MKLTCVIVAVLFLTAWTFVMA) are cleaved as a signal peptide. Positions 22 to 53 (DDPRDGPDTAVRGGKRFWKARNEMNSAASKLN) are excised as a propeptide. 3 disulfides stabilise this stretch: Cys57-Cys75, Cys64-Cys79, and Cys74-Cys83.

Belongs to the conotoxin O1 superfamily. Expressed by the venom duct.

It is found in the secreted. This Conus marmoreus (Marble cone) protein is Conotoxin MaIr34.